The chain runs to 351 residues: Holliday junction branch migration complex subunit RuvB (351 aa).

The interval 1–182 (MNDRLITPDA…FGIVQRLEYY (182 aa)) is large ATPase domain (RuvB-L). ATP-binding positions include Ile-21, Arg-22, Gly-63, Lys-66, Thr-67, Thr-68, 129–131 (EDF), Arg-172, Tyr-182, and Arg-219. Thr-67 is a Mg(2+) binding site. Residues 183 to 253 (NVADLSGIVK…VAHAAMELLN (71 aa)) are small ATPAse domain (RuvB-S). The interval 256–351 (RNGFDEQDRR…QDAPPVGRER (96 aa)) is head domain (RuvB-H). The DNA site is built by Arg-292, Arg-311, and Arg-316. Residues 328-351 (LNPPRQPDTSPDLFQDAPPVGRER) are disordered.

This sequence belongs to the RuvB family. As to quaternary structure, homohexamer. Forms an RuvA(8)-RuvB(12)-Holliday junction (HJ) complex. HJ DNA is sandwiched between 2 RuvA tetramers; dsDNA enters through RuvA and exits via RuvB. An RuvB hexamer assembles on each DNA strand where it exits the tetramer. Each RuvB hexamer is contacted by two RuvA subunits (via domain III) on 2 adjacent RuvB subunits; this complex drives branch migration. In the full resolvosome a probable DNA-RuvA(4)-RuvB(12)-RuvC(2) complex forms which resolves the HJ.

It is found in the cytoplasm. It catalyses the reaction ATP + H2O = ADP + phosphate + H(+). Its function is as follows. The RuvA-RuvB-RuvC complex processes Holliday junction (HJ) DNA during genetic recombination and DNA repair, while the RuvA-RuvB complex plays an important role in the rescue of blocked DNA replication forks via replication fork reversal (RFR). RuvA specifically binds to HJ cruciform DNA, conferring on it an open structure. The RuvB hexamer acts as an ATP-dependent pump, pulling dsDNA into and through the RuvAB complex. RuvB forms 2 homohexamers on either side of HJ DNA bound by 1 or 2 RuvA tetramers; 4 subunits per hexamer contact DNA at a time. Coordinated motions by a converter formed by DNA-disengaged RuvB subunits stimulates ATP hydrolysis and nucleotide exchange. Immobilization of the converter enables RuvB to convert the ATP-contained energy into a lever motion, pulling 2 nucleotides of DNA out of the RuvA tetramer per ATP hydrolyzed, thus driving DNA branch migration. The RuvB motors rotate together with the DNA substrate, which together with the progressing nucleotide cycle form the mechanistic basis for DNA recombination by continuous HJ branch migration. Branch migration allows RuvC to scan DNA until it finds its consensus sequence, where it cleaves and resolves cruciform DNA. The protein is Holliday junction branch migration complex subunit RuvB of Alkalilimnicola ehrlichii (strain ATCC BAA-1101 / DSM 17681 / MLHE-1).